We begin with the raw amino-acid sequence, 153 residues long: MTHDNKLQVEAIKCGTVIDHIPAHVGFKLLTLFKLTETDRRVTIGLNLPSNAQGSKDLIKIEDVFLSEEQVNQLAIYAPRATVNCIENYSVVRKMVPSLPERIDSVLTCPNSNCISRSEPVCSSFSVRARAGEVLLKCKYCEKEFAHHAVMEQ.

Cys-109, Cys-114, Cys-138, and Cys-141 together coordinate Zn(2+).

This sequence belongs to the PyrI family. Contains catalytic and regulatory chains. Zn(2+) serves as cofactor.

Involved in allosteric regulation of aspartate carbamoyltransferase. The protein is Aspartate carbamoyltransferase regulatory chain of Edwardsiella ictaluri (strain 93-146).